The primary structure comprises 384 residues: Aryl-alcohol dehydrogenase GME11368 (384 aa).

An NADP(+)-binding site is contributed by Asp-69. Residue Tyr-74 is the Proton donor of the active site. NADP(+) is bound by residues 177–178, Gln-203, and 301–309; these read SD and RKPEHLKAN.

This sequence belongs to the aldo/keto reductase family. Aldo/keto reductase 2 subfamily.

The protein operates within secondary metabolite biosynthesis. Functionally, aryl-alcohol dehydrogenase; part of the gene cluster that mediates the biosynthesis of dibenzodioxocinones such as pestalotiollide B, a novel class of inhibitors against cholesterol ester transfer protein (CEPT). The biosynthesis initiates from condensation of acetate and malonate units catalyzed by the non-reducing PKS pks8/GME11356. Pks8/GME11356 lacks a thioesterase (TE) domain, which is important to the cyclizing of the third ring of atrochrysone carboxylic acid, and the esterase GME11355 might play the role of TE and catalyzes the cyclization reaction of the C ring. The lactamase-like protein GME11357 (or other beta-lactamases in Pestalotiopsis microspora) probably hydrolyzes the thioester bond between the ACP of pks8/GME11356 and the intermediate to release atrochrysone carboxylic acid, which is spontaneously dehydrates to form endocrocin anthrone. Endocrocin anthrone is further converted to emodin via the endocrocin intermediate. Emodin is then oxidized by several enzymes such as the Baeyer-Villiger oxidase GME11358, the oxidoreductase GME11367, the short chain dehydrogenase/reductase GME11373, as well as by other oxidoreductases from the cluster, to modify the A and C rings and open the B ring, and finally yield monodictyphenone. The prenyltransferase GME11375 may catalyze the addition reaction between the C5 side chains and the carbon bone of dibenzodioxocinones. The remaining biochemical reactions to the final product dibenzodioxocinones should be methylation catalyzed by methyltransferase GME11366 and reduction and lactonization reaction catalyzed by a series of oxidordeuctases. This Pestalotiopsis microspora protein is Aryl-alcohol dehydrogenase GME11368.